A 328-amino-acid chain; its full sequence is MIEKIWSGESPLWRLLLPLSWLYGLVSGAIRLCYKLKLKRAWRAPVPVVVVGNLTAGGNGKTPVVVWLVEQLQQRGIRVGVVSRGYGGKAESYPLLLSADTTTAQAGDEPVLIYQRTDAPVAVSPVRSDAVKAILAQHPDVQIIVTDDGLQHYRLARDVEIVVIDGVRRFGNGWWLPAGPMRERAGRLKSVDAVIVNGGVPRSGEIPMHLLPGQAVNLRTGTRCDVAQLEHVVAMAGIGHPPRFFATLKMCGVQPEKCVPLADHQSLNHADVSALVSAGQTLVMTEKDAVKCRAFAEENWWYLPVDAQLSGDEPAKLLTQLTSLASGN.

55-62 (TAGGNGKT) serves as a coordination point for ATP.

This sequence belongs to the LpxK family.

It carries out the reaction a lipid A disaccharide + ATP = a lipid IVA + ADP + H(+). The protein operates within glycolipid biosynthesis; lipid IV(A) biosynthesis; lipid IV(A) from (3R)-3-hydroxytetradecanoyl-[acyl-carrier-protein] and UDP-N-acetyl-alpha-D-glucosamine: step 6/6. Its function is as follows. Transfers the gamma-phosphate of ATP to the 4'-position of a tetraacyldisaccharide 1-phosphate intermediate (termed DS-1-P) to form tetraacyldisaccharide 1,4'-bis-phosphate (lipid IVA). This is Tetraacyldisaccharide 4'-kinase from Escherichia coli (strain 55989 / EAEC).